Here is a 708-residue protein sequence, read N- to C-terminus: E3 ubiquitin-protein ligase Praja-2 (708 aa).

Positions 1-10 (MSQYTEKEPA) are enriched in basic and acidic residues. 2 disordered regions span residues 1–30 (MSQYTEKEPAAMDQESGKAVWPKPAGGYQT) and 53–90 (ERSLGRAGDDYEVLELDDVPKENSSGSSPLDQVDSSLP). Serine 2 is subject to N-acetylserine. Over residues 74–90 (ENSSGSSPLDQVDSSLP) the composition is skewed to polar residues. Phosphoserine is present on serine 196. 3 disordered regions span residues 244-342 (GDTE…KQRS), 385-411 (TQRETENNQVTPESGATAGRQEVDNPF), and 425-495 (DEDS…QTSL). A Phosphothreonine modification is found at threonine 246. Over residues 249 to 276 (VHQNSQEIQRSSQDEMVSTKQQNNTSQE) the composition is skewed to polar residues. A phosphoserine mark is found at serine 253, serine 309, and serine 323. Residues 322-332 (ISSSQVDQETG) show a composition bias toward polar residues. Positions 333-342 (FNRHEAKQRS) are enriched in basic and acidic residues. Serine 342 bears the Phosphoserine; by PKA mark. The residue at position 389 (threonine 389) is a Phosphothreonine; by PKA. At serine 432 the chain carries Phosphoserine. Over residues 467–483 (NEPELQSDSSGPEEENQ) the composition is skewed to acidic residues. Residues 484–493 (ELSLQEGEQT) are compositionally biased toward polar residues. The segment at 531–708 (DGNNNLEDDS…PSNDSIAEAP (178 aa)) is interaction with PRKAR1A, PRKAR2A and PRKAR2B. Residues 550–570 (WSLFDGFADGLGVAEAISYVD) are mediates interaction with TBC1D31. The segment at 634-675 (CPICCSEYIKDDIATELPCHHFFHKPCVSIWLQKSGTCPVCR) adopts an RING-type; atypical zinc-finger fold. The interval 685–708 (ASAAPSSEPDPDAPPSNDSIAEAP) is disordered. Positions 699 to 708 (PSNDSIAEAP) are enriched in low complexity.

In terms of assembly, binds ubiquitin-conjugating enzymes (E2s). In vitro, interacts with the ubiquitin-conjugating enzyme, UBE2D2. The phosphorylated form interacts with PRKAR1A, PRKAR2A and PRKAR2B. Binds the catalytic subunits of cAMP-dependent protein kinase. Interacts with MFHAS1. Interacts with TBC1D31; the interaction is direct and recruits PJA2 to centrosomes.

The protein resides in the cytoplasm. The protein localises to the cell membrane. Its subcellular location is the endoplasmic reticulum membrane. It localises to the golgi apparatus membrane. It is found in the synapse. The protein resides in the postsynaptic density. The protein localises to the cytoskeleton. Its subcellular location is the microtubule organizing center. It localises to the centrosome. It catalyses the reaction S-ubiquitinyl-[E2 ubiquitin-conjugating enzyme]-L-cysteine + [acceptor protein]-L-lysine = [E2 ubiquitin-conjugating enzyme]-L-cysteine + N(6)-ubiquitinyl-[acceptor protein]-L-lysine.. It participates in protein modification; protein ubiquitination. Its function is as follows. Has E2-dependent E3 ubiquitin-protein ligase activity. Responsible for ubiquitination of cAMP-dependent protein kinase type I and type II-alpha/beta regulatory subunits and for targeting them for proteasomal degradation. Essential for PKA-mediated long-term memory processes. Through the ubiquitination of MFHAS1, positively regulates the TLR2 signaling pathway that leads to the activation of the downstream p38 and JNK MAP kinases and promotes the polarization of macrophages toward the pro-inflammatory M1 phenotype. Plays a role in ciliogenesis by ubiquitinating OFD1. The polypeptide is E3 ubiquitin-protein ligase Praja-2 (PJA2) (Pongo abelii (Sumatran orangutan)).